We begin with the raw amino-acid sequence, 133 residues long: MRCRVYYEDTDSEGVVYHANYLKYCERARSEFFFKQNVLPENEEGVFVIRSIKADFFTPASLGQVLEIRTQIKELRKVFVVLFQEIYCIQNASLEPMKPFKVFASEIKFGFVNRSTYSPIAIPKLFKELLSAV.

Asp-11 is a catalytic residue.

Belongs to the 4-hydroxybenzoyl-CoA thioesterase family. In terms of assembly, homotetramer. May interact with CagA.

Thioesterase that may be involved in phospholipid metabolism. Displays acyl-CoA thioesterase activity with lauroyl-CoA (C12:0), myristoyl-CoA (C14:0), palmitoyl-CoA (C16:0), stearoyl-CoA (C18:0) and benzoyl-CoA, catalyzing the hydrolysis of the thioester bond. Has low activity with butyryl-CoA and octanoyl-CoA. The polypeptide is Acyl-CoA thioesterase YbgC (ybgC) (Helicobacter pylori (strain J99 / ATCC 700824) (Campylobacter pylori J99)).